The primary structure comprises 163 residues: MPSFDIVSEIDMQEVRNAVENATRDLANRWDFRNVPASFELNEKNESIKVVSESDFQVEQLLDILRAQLSKRGIEGAALEIPEEMARSGKTYSVDAKLKQGIESVQAKKLVKLIKDSKLKVQAQIQGEQVRVTGKARDDLQAVMALVRAADLGQPFQFNNFRD.

This sequence belongs to the YajQ family.

In terms of biological role, nucleotide-binding protein. The sequence is that of Nucleotide-binding protein YPDSF_2805 from Yersinia pestis (strain Pestoides F).